The primary structure comprises 713 residues: Low-density lipoprotein receptor-related protein 10 (713 aa).

The N-terminal stretch at 1-16 is a signal peptide; it reads MLLATLLLLLLGGALA. At 17–440 the chain is on the extracellular side; the sequence is HPDRIIFPNH…WDCSYVLPRK (424 aa). 2 disulfides stabilise this stretch: Cys28–Cys57 and Cys80–Cys98. Residues 28-136 enclose the CUB 1 domain; the sequence is CEDPPAVLLE…QGFLLSYSQD (109 aa). Residue Asn56 is glycosylated (N-linked (GlcNAc...) asparagine). N-linked (GlcNAc...) asparagine glycosylation is present at Asn111. In terms of domain architecture, LDL-receptor class A 1 spans 139 to 175; that stretch reads MCLQEEFQCLNHRCVSAVQRCDGVDACGDGSDEAGCS. Disulfide bonds link Cys140/Cys152, Cys147/Cys165, Cys159/Cys174, and Cys192/Cys220. The region spanning 192 to 305 is the CUB 2 domain; sequence CNVTLEDFYG…RGFNATYHVR (114 aa). N-linked (GlcNAc...) asparagine glycans are attached at residues Asn193 and Asn299. LDL-receptor class A domains are found at residues 307-354, 355-397, and 398-434; these read YCLP…EDCP, GCPP…RRCR, and HCQPGNFRCRDEKCVYETWVCDGQPDCADGSDEWDCS. Intrachain disulfides connect Cys308–Cys331, Cys315–Cys344, Cys338–Cys353, Cys356–Cys374, Cys363–Cys387, Cys381–Cys396, Cys399–Cys411, Cys406–Cys424, and Cys418–Cys433. The chain crosses the membrane as a helical span at residues 441–461; the sequence is VITAAVIGSLVCGLLLVIALG. The Cytoplasmic segment spans residues 462 to 713; it reads CTCKLYAIRT…AEAEDEPLLT (252 aa). The interval 564-637 is disordered; it reads GLLPRTNTPA…SPAPTTVPEA (74 aa). Positions 569-584 are enriched in polar residues; the sequence is TNTPARASEARSQVTP. Thr596 carries the post-translational modification Phosphothreonine. Over residues 621–636 the composition is skewed to low complexity; it reads PLPSASTSPAPTTVPE.

The protein belongs to the LDLR family. As to expression, expressed in blood leukocyte, lung, placenta, small intestine, liver, kidney, spleen, thymus, colon, skeletal muscle and heart.

It is found in the membrane. It localises to the coated pit. Probable receptor, which is involved in the internalization of lipophilic molecules and/or signal transduction. May be involved in the uptake of lipoprotein APOE in liver. The chain is Low-density lipoprotein receptor-related protein 10 (LRP10) from Homo sapiens (Human).